The following is a 714-amino-acid chain: A-kinase anchor protein 5 (714 aa).

Disordered stretches follow at residues 1 to 146 (METS…GYVR) and 243 to 333 (VLEN…VGHT). Residues 1–164 (METSVSEIQI…EIKAQIQPDE (164 aa)) form an essential to the intracellular anchoring function region. 2 positions are modified to phosphoserine: S4 and S22. The segment covering 10 to 32 (IETKDEKRPEAASPQKERQERKT) has biased composition (basic and acidic residues). The S-palmitoyl cysteine moiety is linked to residue C36. Positions 37-50 (FKRRKKVNKKKAKA) are enriched in basic residues. Composition is skewed to basic and acidic residues over residues 54–63 (TAEETEKHAP) and 88–100 (KPSESAEKQKPSE). Residues 74 to 94 (AGAWASIKRLVTHRKPSESAE) carry the AKAP CaM-binding motif. Residue C123 is the site of S-palmitoyl cysteine attachment. A compositionally biased stretch (polar residues) spans 243-268 (VLENSAADSPQPVTSTAPLSPATTHQ). Basic and acidic residues predominate over residues 285–301 (GKDDGRRKTAAEEKKSG). Residues 305–312 (LGQAEEAS) form a 1; approximate repeat. A 28 X 8 AA repeats of V-G-Q-A-E-E-A-T region spans residues 305 to 597 (LGQAEEASSV…PIVGQAEETV (293 aa)). The segment covering 310 to 323 (EASSVSQADKSVLS) has biased composition (polar residues). The stretch at 322–329 (LSQAEEAT) is one 2; approximate repeat. Residues 330–337 (VGHTEEAT) form a 3; approximate repeat. The 4; approximate repeat unit spans residues 350–357 (LSQAEEAT). Residues 358 to 365 (VAQAKETV) form a 5; approximate repeat. The stretch at 366 to 373 (LSQAEEVK) is one 6; approximate repeat. A 7; approximate repeat occupies 398 to 405 (VSQAEEAI). An 8; approximate repeat occupies 414 to 421 (MGQAEEAT). 5 repeat units span residues 430–437 (VGQAEEAT), 438–445 (VGQAEEAT), 446–453 (VGQAEEAT), 454–461 (VGQAEEAT), and 462–469 (VGQAEEAT). Residues 470–477 (VGQAGEAT) form a 14; approximate repeat. The 15; approximate repeat unit spans residues 486 to 493 (VGQAEEAI). 4 repeat units span residues 494 to 501 (VGQAEEAT), 502 to 509 (VGQAEEAT), 510 to 517 (VGQAEEAT), and 518 to 525 (VGQAEEAT). The 20; approximate repeat unit spans residues 526–533 (VDQAEEAT). Residues 534 to 541 (VGQAEEAT) form repeat 21. One copy of the 22; approximate repeat lies at 542 to 549 (VGQAGEAA). A 23; approximate repeat occupies 550-557 (VGQAEEAI). One copy of the 24; approximate repeat lies at 558 to 565 (VAQAEEAT). Residues 566–573 (VGQAGEAT) form repeat 25. A 26; approximate repeat occupies 574 to 581 (VGQAEKAT). A 27; approximate repeat occupies 582–589 (VGQAEEPI). The stretch at 590-597 (VGQAEETV) is one 28; approximate repeat. The tract at residues 675 to 696 (YETLLIETASSLVKNAIELSVE) is RII-beta subunit binding domain. The tract at residues 697–714 (QLVNEMVSEDNQINTLFQ) is tethers NFATC2 to CRAC channels.

In terms of assembly, binding protein for dimer of the RII-beta regulatory subunit of cAMP-dependent protein kinase (PKA) and also for the protein kinase C (PKC) and the phosphatase calcineurin (PP2B). Each enzyme is inhibited when bound to the anchoring protein. Also binds the beta2-adrenergic receptor. Part of a complex containing AKAP5, ADCY5, ADCY6 and PDE4C. Interacts with ADCY8, and enhances its phosphorylation at lipid rafts. Interacts with ORAI1 (isoform alpha) (via N-terminus) upon store depletion and in response to LTC4. Does not interact with ORAI2 and ORAI3 paralogs. Interacts (via leucine zipper domain) with NFATC2/NFAT1. Interacts with calmodulin; the interaction is calcium-independent. Interacts with KCNQ2; the interaction may help KCNQ2 channel complex to retain calcium-bound calmodulin. Interacts with KCNK2; the channel is recruited to postsynaptic microdomains by AKAP5 where it can integrate neurotransmitter receptor signals. Part of a complex composed of AKAP5 and ADRB2. Post-translationally, palmitoylated. Palmitoylation at Cys-36 and Cys-123 plays a key role in the targeting of AKAP5 to lipid rafts. Palmitoylation by ZDHHC2 is required for AKAP5 function in LTP-stimulated recycling endosome exocytosis.

It is found in the postsynaptic recycling endosome membrane. The protein localises to the cell projection. The protein resides in the dendrite. It localises to the postsynaptic cell membrane. Multivalent scaffold protein that anchors the cAMP-dependent protein kinase/PKA to cytoskeletal and/or organelle-associated proteins, targeting the signal carried by cAMP to specific intracellular effectors. Association with the beta2-adrenergic receptor (beta2-AR) not only regulates beta2-AR signaling pathway, but also the activation by PKA by switching off the beta2-AR signaling cascade. Plays a role in long term synaptic potentiation by regulating protein trafficking from the dendritic recycling endosomes to the plasma membrane and controlling both structural and functional plasticity at excitatory synapses. In hippocampal pyramidal neurons, recruits KCNK2/TREK-1 channel at postsynaptic dense bodies microdomains and converts it to a leak channel no longer sensitive to stimulation by arachidonic acid, acidic pH or mechanical stress, nor inhibited by Gq-coupled receptors but still under the negative control of Gs-coupled receptors. Associates with ORAI1 pore-forming subunit of CRAC channels in Ca(2+) signaling microdomains where it recruits NFATC2/NFAT1 and couples store-operated Ca(2+) influx to calmodulin and calcineurin signaling and activation of NFAT-dependent transcriptional responses. This chain is A-kinase anchor protein 5 (Akap5), found in Rattus norvegicus (Rat).